Here is a 324-residue protein sequence, read N- to C-terminus: MINFSSFYQHIAQDERLFHWLDTLPAQLSEWRAHALHGHFASWERMLENLPEITPTELNLKQGVIANKTPALSTGEQLGLTNILKALMPWRKGPFSLYGVNIDTEWRSDWKWDRVLPHLSPLKGRLVLDVGCGSGYHMWRMLGEGADFVVGIDPTQLFLCQFEAVRKLLGNDQRAHLIPVGIEQMPELNAFDTVFSMGVLYHRRSPLDHLWQLKNQLVSGGELVLESLVIDGDEFQCLIPGERYAQMRNVYFIPSAKMLKVWLEKCGFKDVRIVDENVTSLEEQRKTDWMVTDSLEAFLDPLDHTKTVEGYPAPKRAILIATKP.

Residues lysine 92, tryptophan 106, lysine 111, glycine 131, 153-155 (DPT), 182-183 (IE), methionine 197, tyrosine 201, and arginine 316 each bind carboxy-S-adenosyl-L-methionine.

It belongs to the class I-like SAM-binding methyltransferase superfamily. CmoB family. As to quaternary structure, homotetramer.

The catalysed reaction is carboxy-S-adenosyl-L-methionine + 5-hydroxyuridine(34) in tRNA = 5-carboxymethoxyuridine(34) in tRNA + S-adenosyl-L-homocysteine + H(+). Functionally, catalyzes carboxymethyl transfer from carboxy-S-adenosyl-L-methionine (Cx-SAM) to 5-hydroxyuridine (ho5U) to form 5-carboxymethoxyuridine (cmo5U) at position 34 in tRNAs. This is tRNA U34 carboxymethyltransferase from Proteus mirabilis (strain HI4320).